The following is a 513-amino-acid chain: Ectonucleoside triphosphate diphosphohydrolase 1 (513 aa).

Over 1-16 (MEDRRESELKVFCSKN) the chain is Cytoplasmic. Residues 17 to 37 (ILSILGFSCIIAVIALLALGL) form a helical membrane-spanning segment. Topologically, residues 38–481 (TQNKALPENV…SPPLPHSTYV (444 aa)) are extracellular. Asn73 carries an N-linked (GlcNAc...) asparagine glycan. Glu174 serves as the catalytic Proton acceptor. Asn227 and Asn245 each carry an N-linked (GlcNAc...) asparagine glycan. 2 disulfides stabilise this stretch: Cys255–Cys300 and Cys281–Cys327. N-linked (GlcNAc...) asparagine glycans are attached at residues Asn307 and Asn336. Cys340 and Cys345 form a disulfide bridge. An N-linked (GlcNAc...) asparagine glycan is attached at Asn373. Cys393 and Cys416 are joined by a disulfide. A glycan (N-linked (GlcNAc...) asparagine) is linked at Asn460. The chain crosses the membrane as a helical span at residues 482-502 (FLMVLFSLILLAVIIVGIVVF). Topologically, residues 503 to 513 (HKPSYFWKDMV) are cytoplasmic.

The protein belongs to the GDA1/CD39 NTPase family. As to quaternary structure, homodimer; disulfide-linked. Ca(2+) is required as a cofactor. It depends on Mg(2+) as a cofactor. Post-translationally, N-glycosylated. The N-terminus is blocked. In terms of processing, palmitoylated on Cys-13; which is required for caveola targeting.

It is found in the membrane. The protein resides in the caveola. The enzyme catalyses a ribonucleoside 5'-triphosphate + 2 H2O = a ribonucleoside 5'-phosphate + 2 phosphate + 2 H(+). The catalysed reaction is a ribonucleoside 5'-triphosphate + H2O = a ribonucleoside 5'-diphosphate + phosphate + H(+). It carries out the reaction a ribonucleoside 5'-diphosphate + H2O = a ribonucleoside 5'-phosphate + phosphate + H(+). It catalyses the reaction ATP + 2 H2O = AMP + 2 phosphate + 2 H(+). The enzyme catalyses ATP + H2O = ADP + phosphate + H(+). The catalysed reaction is ADP + H2O = AMP + phosphate + H(+). It carries out the reaction CTP + 2 H2O = CMP + 2 phosphate + 2 H(+). It catalyses the reaction CTP + H2O = CDP + phosphate + H(+). The enzyme catalyses CDP + H2O = CMP + phosphate + H(+). The catalysed reaction is GTP + 2 H2O = GMP + 2 phosphate + 2 H(+). It carries out the reaction GTP + H2O = GDP + phosphate + H(+). It catalyses the reaction GDP + H2O = GMP + phosphate + H(+). The enzyme catalyses ITP + 2 H2O = IMP + 2 phosphate + 2 H(+). The catalysed reaction is ITP + H2O = IDP + phosphate + H(+). It carries out the reaction IDP + H2O = IMP + phosphate + H(+). It catalyses the reaction UTP + 2 H2O = UMP + 2 phosphate + 2 H(+). The enzyme catalyses UTP + H2O = UDP + phosphate + H(+). The catalysed reaction is UDP + H2O = UMP + phosphate + H(+). Its function is as follows. Catalyzes the hydrolysis of both di- and triphosphate nucleotides (NDPs and NTPs) and hydrolyze NTPs to nucleotide monophosphates (NMPs) in two distinct successive phosphate-releasing steps, with NDPs as intermediates and participates in the regulation of extracellular levels of nucleotides. By hydrolyzing proinflammatory ATP and platelet-activating ADP to AMP, it blocks platelet aggregation and supports blood flow. This chain is Ectonucleoside triphosphate diphosphohydrolase 1, found in Bos taurus (Bovine).